Reading from the N-terminus, the 153-residue chain is 6,7-dimethyl-8-ribityllumazine synthase (153 aa).

5-amino-6-(D-ribitylamino)uracil-binding positions include F21, 55 to 57, and 79 to 81; these read AFE and TVI. (2S)-2-hydroxy-3-oxobutyl phosphate is bound at residue 84–85; the sequence is AT. H87 (proton donor) is an active-site residue. A 5-amino-6-(D-ribitylamino)uracil-binding site is contributed by F112. A (2S)-2-hydroxy-3-oxobutyl phosphate-binding site is contributed by R126.

The protein belongs to the DMRL synthase family. As to quaternary structure, forms an icosahedral capsid composed of 60 subunits, arranged as a dodecamer of pentamers.

The enzyme catalyses (2S)-2-hydroxy-3-oxobutyl phosphate + 5-amino-6-(D-ribitylamino)uracil = 6,7-dimethyl-8-(1-D-ribityl)lumazine + phosphate + 2 H2O + H(+). The protein operates within cofactor biosynthesis; riboflavin biosynthesis; riboflavin from 2-hydroxy-3-oxobutyl phosphate and 5-amino-6-(D-ribitylamino)uracil: step 1/2. In terms of biological role, catalyzes the formation of 6,7-dimethyl-8-ribityllumazine by condensation of 5-amino-6-(D-ribitylamino)uracil with 3,4-dihydroxy-2-butanone 4-phosphate. This is the penultimate step in the biosynthesis of riboflavin. The protein is 6,7-dimethyl-8-ribityllumazine synthase of Bacillus cereus (strain AH187).